The chain runs to 82 residues: Small ribosomal subunit protein bS20 (82 aa).

It belongs to the bacterial ribosomal protein bS20 family.

Binds directly to 16S ribosomal RNA. The chain is Small ribosomal subunit protein bS20 from Lysinibacillus sphaericus (strain C3-41).